The sequence spans 37 residues: Large ribosomal subunit protein bL36 (37 aa).

Belongs to the bacterial ribosomal protein bL36 family.

The polypeptide is Large ribosomal subunit protein bL36 (rpmJ) (Geobacillus stearothermophilus (Bacillus stearothermophilus)).